The sequence spans 129 residues: Follitropin subunit beta (129 aa).

The N-terminal stretch at 1–20 is a signal peptide; it reads MKSVQFCFLFCCWRAICCRS. Intrachain disulfides connect C21–C69, C35–C84, C38–C122, C46–C100, C50–C102, and C105–C112. N25 and N42 each carry an N-linked (GlcNAc...) asparagine glycan.

It belongs to the glycoprotein hormones subunit beta family. As to quaternary structure, heterodimer. The active follitropin is a heterodimer composed of an alpha chain/CGA shared with other hormones and a unique beta chain/FSHB shown here.

Its subcellular location is the secreted. Together with the alpha chain CGA constitutes follitropin, the follicle-stimulating hormone, and provides its biological specificity to the hormone heterodimer. Binds FSHR, a G protein-coupled receptor, on target cells to activate downstream signaling pathways. Follitropin is involved in follicle development and spermatogenesis in reproductive organs. This Bubalus bubalis (Domestic water buffalo) protein is Follitropin subunit beta (FSHB).